Here is a 524-residue protein sequence, read N- to C-terminus: Lysine--tRNA ligase (524 aa).

The 'HIGH' region signature appears at Ala-39–Ser-47. The 'KMSKS' region motif lies at Lys-294–Ser-298. Lys-297 lines the ATP pocket.

Belongs to the class-I aminoacyl-tRNA synthetase family.

It localises to the cytoplasm. The enzyme catalyses tRNA(Lys) + L-lysine + ATP = L-lysyl-tRNA(Lys) + AMP + diphosphate. The protein is Lysine--tRNA ligase (lysS) of Cenarchaeum symbiosum.